Reading from the N-terminus, the 152-residue chain is Deoxyuridine 5'-triphosphate nucleotidohydrolase (152 aa).

Substrate contacts are provided by residues 71 to 73 (RSG), asparagine 84, and 88 to 90 (LID).

Belongs to the dUTPase family. The cofactor is Mg(2+).

It catalyses the reaction dUTP + H2O = dUMP + diphosphate + H(+). The protein operates within pyrimidine metabolism; dUMP biosynthesis; dUMP from dCTP (dUTP route): step 2/2. Its function is as follows. This enzyme is involved in nucleotide metabolism: it produces dUMP, the immediate precursor of thymidine nucleotides and it decreases the intracellular concentration of dUTP so that uracil cannot be incorporated into DNA. The protein is Deoxyuridine 5'-triphosphate nucleotidohydrolase of Xanthomonas campestris pv. campestris (strain 8004).